Consider the following 260-residue polypeptide: UPF0246 protein Bcep1808_2308 (260 aa).

The protein belongs to the UPF0246 family.

This chain is UPF0246 protein Bcep1808_2308, found in Burkholderia vietnamiensis (strain G4 / LMG 22486) (Burkholderia cepacia (strain R1808)).